We begin with the raw amino-acid sequence, 195 residues long: MLQPTQTSWVILAGGQASRMGGKDKGLIELNQKPLIEHVIERLSPQTPRILINANRNQDAYSKFGFVFSDQFKDFPGPMGGIHAGLMHAETDWVGFVPCDSPQINTDLVERFCQAVKEDSDILVAHDGDHQQPVFTLYHKRVLPKLTAFLERGDRKIILLYKECNTSYVDFSDSPNCFVNLNTPEELAQFGQLES.

Residues 12–14 (LAG), K25, N53, D70, and D100 contribute to the GTP site. D100 is a Mg(2+) binding site.

It belongs to the MobA family. Monomer. Mg(2+) is required as a cofactor.

The protein resides in the cytoplasm. The enzyme catalyses Mo-molybdopterin + GTP + H(+) = Mo-molybdopterin guanine dinucleotide + diphosphate. Functionally, transfers a GMP moiety from GTP to Mo-molybdopterin (Mo-MPT) cofactor (Moco or molybdenum cofactor) to form Mo-molybdopterin guanine dinucleotide (Mo-MGD) cofactor. The chain is Molybdenum cofactor guanylyltransferase from Vibrio parahaemolyticus serotype O3:K6 (strain RIMD 2210633).